Reading from the N-terminus, the 880-residue chain is MTNELTPKFNPTEVEAGRYEKWLEADVFKPSGNPDAEPYSIVIPPPNVTGKLHLGHAWDTTLQDIIIRQKRMQGFDTLWLPGMDHAGIATQAKVAARLAEDGILPQDLGREKFLDKVWEWKDEYATTIKEQWGKMGISVDYSRERFTLDEGLSQAVRKVFVQLYNKGWIYRGEKLINWDPKAMTALSDIEVIHKEIDGAFYHITYQIEGSDEFVEIATTRPETFLGDTAVIVNEKDERYKHLVGKNVILPIINRVIPILTDDHADMEKGTGVVKITPAHDPNDFEVAMRHDLPMINMMNNDGTINENGGKYEGLDRFEARKQIVADLKELGQLVDIKPVRHEVGHSERTGVVVEPRLSTQWFVKMDELAKNAIANQTTEDAVEFYPPRFNDTFMQWMENVHDWVISRQLWWGHQIPAWYNEAGEMYVGEEAPEGEGWTQDEDVLDTWFSSALWPFSTMGWPDENSADFIRYFPTSTLVTGYDIIFFWVSRMIFQSLEFTGKSPFHNVLIHGLIRDEEGRKMSKSLGNGIDPMDVIEKYGADALRWFLSNGSAPGQDVRFSYDKMDAAWNFINKIWNVSRYILMNAEDISADAVSSALTKVANKTAGNVTDRWILTRLNDTVERVTEQMDKFEFGVAGHILYNFIWDEFANWYLELTKEVMFGEDEAEKDITRAVLLHVLDQVLRLLHPIMPFFTEEIFEKLPNTSGSIVVAEYPKVRPEFNDDKASEGVAMLIELITAVRNIRAEVNTPLSKAVPMLIKSEHADFLNAVSPYISRFTNPSELTIAKDLAVPEQAMSAVITGAELYLPLAGLINIEEEIARLEKELAKWQKELDLVNKKLGNERFVANAKAEVVQKEKDKLADYQEKFDTVKARIAELKEN.

The 'HIGH' region motif lies at 46 to 56; the sequence is PNVTGKLHLGH. The short motif at 520–524 is the 'KMSKS' region element; it reads KMSKS. Lysine 523 provides a ligand contact to ATP. Residues 808–880 are a coiled coil; the sequence is LAGLINIEEE…KARIAELKEN (73 aa).

This sequence belongs to the class-I aminoacyl-tRNA synthetase family. ValS type 1 subfamily. In terms of assembly, monomer.

It localises to the cytoplasm. It carries out the reaction tRNA(Val) + L-valine + ATP = L-valyl-tRNA(Val) + AMP + diphosphate. In terms of biological role, catalyzes the attachment of valine to tRNA(Val). As ValRS can inadvertently accommodate and process structurally similar amino acids such as threonine, to avoid such errors, it has a 'posttransfer' editing activity that hydrolyzes mischarged Thr-tRNA(Val) in a tRNA-dependent manner. The protein is Valine--tRNA ligase of Lactococcus lactis subsp. lactis (strain IL1403) (Streptococcus lactis).